The sequence spans 217 residues: Ribonuclease T (217 aa).

The 175-residue stretch at 20–194 (VVIDVETGGF…YDTDRTAELF (175 aa)) folds into the Exonuclease domain. Mg(2+) is bound by residues Asp23, Glu25, His181, and Asp186. The Proton donor/acceptor role is filled by His181.

Belongs to the RNase T family. In terms of assembly, homodimer. It depends on Mg(2+) as a cofactor.

Its function is as follows. Trims short 3' overhangs of a variety of RNA species, leaving a one or two nucleotide 3' overhang. Responsible for the end-turnover of tRNA: specifically removes the terminal AMP residue from uncharged tRNA (tRNA-C-C-A). Also appears to be involved in tRNA biosynthesis. The protein is Ribonuclease T of Photorhabdus laumondii subsp. laumondii (strain DSM 15139 / CIP 105565 / TT01) (Photorhabdus luminescens subsp. laumondii).